The primary structure comprises 55 residues: ATP synthase F(0) complex subunit 8 (55 aa).

A helical membrane pass occupies residues 4 to 24 (LNPAPWFTILVFSWMIFLAII). The span at 32-41 (TSPNDSSPLS) shows a compositional bias: polar residues. The tract at residues 32 to 55 (TSPNDSSPLSTEKHKTESWDWPWQ) is disordered.

It belongs to the ATPase protein 8 family. In terms of assembly, component of the ATP synthase complex composed at least of ATP5F1A/subunit alpha, ATP5F1B/subunit beta, ATP5MC1/subunit c (homooctomer), MT-ATP6/subunit a, MT-ATP8/subunit 8, ATP5ME/subunit e, ATP5MF/subunit f, ATP5MG/subunit g, ATP5MK/subunit k, ATP5MJ/subunit j, ATP5F1C/subunit gamma, ATP5F1D/subunit delta, ATP5F1E/subunit epsilon, ATP5PF/subunit F6, ATP5PB/subunit b, ATP5PD/subunit d, ATP5PO/subunit OSCP. ATP synthase complex consists of a soluble F(1) head domain (subunits alpha(3) and beta(3)) - the catalytic core - and a membrane F(0) domain - the membrane proton channel (subunits c, a, 8, e, f, g, k and j). These two domains are linked by a central stalk (subunits gamma, delta, and epsilon) rotating inside the F1 region and a stationary peripheral stalk (subunits F6, b, d, and OSCP).

It is found in the mitochondrion membrane. Functionally, subunit 8, of the mitochondrial membrane ATP synthase complex (F(1)F(0) ATP synthase or Complex V) that produces ATP from ADP in the presence of a proton gradient across the membrane which is generated by electron transport complexes of the respiratory chain. ATP synthase complex consist of a soluble F(1) head domain - the catalytic core - and a membrane F(1) domain - the membrane proton channel. These two domains are linked by a central stalk rotating inside the F(1) region and a stationary peripheral stalk. During catalysis, ATP synthesis in the catalytic domain of F(1) is coupled via a rotary mechanism of the central stalk subunits to proton translocation. In vivo, can only synthesize ATP although its ATP hydrolase activity can be activated artificially in vitro. Part of the complex F(0) domain. The protein is ATP synthase F(0) complex subunit 8 of Formosania lacustris (Oriental stream loach).